Here is a 170-residue protein sequence, read N- to C-terminus: Phosphopantetheine adenylyltransferase (170 aa).

Thr-17 lines the substrate pocket. Residues 17 to 18 (TF) and His-25 contribute to the ATP site. Lys-49, Leu-81, and Arg-95 together coordinate substrate. ATP contacts are provided by residues 96-98 (GLR), Glu-106, and 131-137 (LMYISST).

Belongs to the bacterial CoaD family. As to quaternary structure, homohexamer. Mg(2+) serves as cofactor.

The protein resides in the cytoplasm. It carries out the reaction (R)-4'-phosphopantetheine + ATP + H(+) = 3'-dephospho-CoA + diphosphate. It functions in the pathway cofactor biosynthesis; coenzyme A biosynthesis; CoA from (R)-pantothenate: step 4/5. Reversibly transfers an adenylyl group from ATP to 4'-phosphopantetheine, yielding dephospho-CoA (dPCoA) and pyrophosphate. This is Phosphopantetheine adenylyltransferase from Legionella pneumophila subsp. pneumophila (strain Philadelphia 1 / ATCC 33152 / DSM 7513).